The following is a 480-amino-acid chain: MTDTTPSADLGASSQQPAKAWSGRFSEPVSDLVKRYTASVFFDNRMAEQDIRGSLAHAKMLARQGIIGAQDLADIERGMAQIKGEIERGEFNWNLDDEDVHLNIEKRLTALVGDAGKRLHTGRSRNDQVATDIRLWLRDAIDQILALIGDFQKNLLDVAEANAATPMPGFTHLQVAQPVTFGHHLMAYFEMTRRDAERFADCRKRVNRLPLGSAALAGTSYPIDREFVARELGFDEVCYNSLDAVSDRDFAIEFCAASSLLMTHLSRFSEELILWMSPRFGFIDLADRFCTGSSIMPQKKNPDVPELVRGKTGRVNGSLIALLTLMKGQPLAYNKDNQEDKEPLFDTADTVIDTLRIYADMITGIRVKADNMRGALTQGYATATDLADYLVKKGLPFRDAHEAVALAVRAAEVRGCDLPQFSLDELRAAMAHVPGAADKLADDIFGVLTVEGSLDSRNHIGGTAPAQVLAAVAHARTRLG.

Polar residues predominate over residues 1–17 (MTDTTPSADLGASSQQP). Residues 1–24 (MTDTTPSADLGASSQQPAKAWSGR) form a disordered region.

It belongs to the lyase 1 family. Argininosuccinate lyase subfamily.

The protein resides in the cytoplasm. It catalyses the reaction 2-(N(omega)-L-arginino)succinate = fumarate + L-arginine. The protein operates within amino-acid biosynthesis; L-arginine biosynthesis; L-arginine from L-ornithine and carbamoyl phosphate: step 3/3. In Azoarcus sp. (strain BH72), this protein is Argininosuccinate lyase.